The following is a 593-amino-acid chain: UvrABC system protein C (593 aa).

The region spanning 14–91 (DSPGCYLHKD…IQENMPKYNI (78 aa)) is the GIY-YIG domain. The region spanning 196 to 231 (NKIVNGLTEKMKSAAMTMEFERAAEYRDLIEAISLL) is the UVR domain.

The protein belongs to the UvrC family. In terms of assembly, interacts with UvrB in an incision complex.

The protein resides in the cytoplasm. The UvrABC repair system catalyzes the recognition and processing of DNA lesions. UvrC both incises the 5' and 3' sides of the lesion. The N-terminal half is responsible for the 3' incision and the C-terminal half is responsible for the 5' incision. The protein is UvrABC system protein C of Streptococcus agalactiae serotype III (strain NEM316).